Reading from the N-terminus, the 482-residue chain is [Fructose-bisphosphate aldolase]-lysine N-methyltransferase, chloroplastic (482 aa).

The N-terminal 57 residues, 1-57 (MSASVAVVSGFLRIPSIQKSQNPSFLFSRPKKSLVRPISASSSELPENVRNFWKWLR), are a transit peptide targeting the chloroplast. The SET domain occupies 59 to 282 (QGVVSGKSVA…AGEQVYIQYD (224 aa)). Residues 75–77 (EGL) and Arg-217 each bind S-adenosyl-L-methionine. Arg-217, Arg-221, and Asp-234 together coordinate substrate. S-adenosyl-L-methionine is bound at residue 237 to 238 (NH). Substrate contacts are provided by Tyr-249, Tyr-281, and Tyr-294.

This sequence belongs to the class V-like SAM-binding methyltransferase superfamily. Plant protein-lysine LSMT methyltransferase family.

The protein resides in the plastid. The protein localises to the chloroplast stroma. It catalyses the reaction [fructose-bisphosphate aldolase]-L-lysine + 3 S-adenosyl-L-methionine = [fructose-bisphosphate aldolase]-N(6),N(6),N(6)-trimethyl-L-lysine + 3 S-adenosyl-L-homocysteine + 3 H(+). Protein-lysine methyltransferase methylating chloroplastic fructose 1,6-bisphosphate aldolases. Can also use with low efficiency gamma-tocopherol methyltransferase as substrate, but not a cytosolic aldolase. Able to interact with unmethylated Rubisco, but unlike in pea, the complex is catalytically unproductive. The polypeptide is [Fructose-bisphosphate aldolase]-lysine N-methyltransferase, chloroplastic (LSMT-L) (Arabidopsis thaliana (Mouse-ear cress)).